Consider the following 150-residue polypeptide: Calmodulin-like protein 7 (150 aa).

EF-hand domains follow at residues 1 to 36 (MDPTELKRVFQMFDKNGDGTITGKELSETLRSLGIY), 37 to 72 (IPDKELTQMIEKIDVNGDGCVDIDEFGELYKTIMDE), 75 to 110 (EEEEDMKEAFNVFDQNGDGFITVDELKAVLSSLGLK), and 113 to 148 (KTLDDCKKMIKKVDVDGDGRVNYKEFRQMMKGGGFN). The Ca(2+) site is built by aspartate 14, asparagine 16, aspartate 18, threonine 20, glutamate 25, aspartate 50, asparagine 52, aspartate 54, cysteine 56, glutamate 61, aspartate 88, asparagine 90, aspartate 92, glutamate 99, aspartate 126, aspartate 128, aspartate 130, arginine 132, and glutamate 137.

Belongs to the calmodulin family.

In terms of biological role, potential calcium sensor. This is Calmodulin-like protein 7 (CML7) from Arabidopsis thaliana (Mouse-ear cress).